We begin with the raw amino-acid sequence, 183 residues long: Protein jagunal homolog 1-B (183 aa).

Residues Met1–Lys39 are Cytoplasmic-facing. A helical membrane pass occupies residues Leu40–Leu60. Residues Asn61 to Pro71 are Lumenal-facing. The helical transmembrane segment at Tyr72–Leu92 threads the bilayer. The Cytoplasmic portion of the chain corresponds to Pro93–Tyr99. A helical transmembrane segment spans residues Leu100–Met120. Residues Glu121–Arg137 lie on the Lumenal side of the membrane. Residues Phe138–Val158 traverse the membrane as a helical segment. Residues His159–Lys183 lie on the Cytoplasmic side of the membrane.

The protein belongs to the jagunal family.

The protein resides in the endoplasmic reticulum membrane. Functionally, endoplasmic reticulum transmembrane protein involved in vesicle-mediated transport, which is required for neutrophil function. In Danio rerio (Zebrafish), this protein is Protein jagunal homolog 1-B (jagn1b).